The following is a 292-amino-acid chain: Phosphatidylglycerol--prolipoprotein diacylglyceryl transferase (292 aa).

3 helical membrane-spanning segments follow: residues 18–38 (LFGV…GLLI), 67–87 (LLTW…VLFY), and 105–125 (GGMS…AFCL). An a 1,2-diacyl-sn-glycero-3-phospho-(1'-sn-glycerol)-binding site is contributed by arginine 150. 3 helical membrane passes run 193–213 (QIYE…LLVW), 222–242 (GSVS…VEFV), and 266–286 (GLTM…YLIL).

This sequence belongs to the Lgt family.

It is found in the cell inner membrane. It carries out the reaction L-cysteinyl-[prolipoprotein] + a 1,2-diacyl-sn-glycero-3-phospho-(1'-sn-glycerol) = an S-1,2-diacyl-sn-glyceryl-L-cysteinyl-[prolipoprotein] + sn-glycerol 1-phosphate + H(+). It participates in protein modification; lipoprotein biosynthesis (diacylglyceryl transfer). Catalyzes the transfer of the diacylglyceryl group from phosphatidylglycerol to the sulfhydryl group of the N-terminal cysteine of a prolipoprotein, the first step in the formation of mature lipoproteins. The protein is Phosphatidylglycerol--prolipoprotein diacylglyceryl transferase of Cereibacter sphaeroides (strain ATCC 17023 / DSM 158 / JCM 6121 / CCUG 31486 / LMG 2827 / NBRC 12203 / NCIMB 8253 / ATH 2.4.1.) (Rhodobacter sphaeroides).